A 202-amino-acid chain; its full sequence is Transmembrane 4 L6 family member 1 (202 aa).

Residues 1-9 lie on the Cytoplasmic side of the membrane; that stretch reads MCSSKCTRY. The chain crosses the membrane as a helical span at residues 10-30; that stretch reads IGHSLVVFAVLCIVANILLYF. Residues 31–49 are Extracellular-facing; the sequence is PNGETKYAYEDHLSRFVWF. Residues 50–70 form a helical membrane-spanning segment; it reads FAGIVGGGLLILLPAFVFLGL. At 71–93 the chain is on the cytoplasmic side; it reads EGEDCCGCWSCENYGKRCTMLSS. Residues 94–114 form a helical membrane-spanning segment; that stretch reads IMAALIGIAGSGYCVIVAALG. Topologically, residues 115–161 are extracellular; the sequence is LAEGPKCGDSHGMWNYTFANTDGQYLLDPTTWSKCHEPNNIVEWNVT. 2 N-linked (GlcNAc...) asparagine glycosylation sites follow: Asn-129 and Asn-159. Residues 162–182 form a helical membrane-spanning segment; sequence LFSILLALGGLEFILCLIQVI. Topologically, residues 183–202 are cytoplasmic; it reads NGVLEGMCSYCCSHQQQYDC.

The protein belongs to the L6 tetraspanin family. As to quaternary structure, present in high molecular weight complexes in tumor cells. Interacts with SDCBP2.

The protein localises to the membrane. The polypeptide is Transmembrane 4 L6 family member 1 (TM4SF1) (Mesocricetus auratus (Golden hamster)).